Reading from the N-terminus, the 177-residue chain is Large ribosomal subunit protein uL6 (177 aa).

This sequence belongs to the universal ribosomal protein uL6 family. In terms of assembly, part of the 50S ribosomal subunit.

This protein binds to the 23S rRNA, and is important in its secondary structure. It is located near the subunit interface in the base of the L7/L12 stalk, and near the tRNA binding site of the peptidyltransferase center. The polypeptide is Large ribosomal subunit protein uL6 (Haemophilus influenzae (strain 86-028NP)).